The chain runs to 88 residues: Small ribosomal subunit protein bS20 (88 aa).

The segment at 1–20 is disordered; it reads MANIKQQKKRNKTNEKRRLR.

Belongs to the bacterial ribosomal protein bS20 family.

Binds directly to 16S ribosomal RNA. The sequence is that of Small ribosomal subunit protein bS20 from Phytoplasma australiense.